Here is a 371-residue protein sequence, read N- to C-terminus: Bifunctional enzyme IspD/IspF (371 aa).

The segment at 1-210 (MSEISLIMLA…LDLPKPSFEI (210 aa)) is 2-C-methyl-D-erythritol 4-phosphate cytidylyltransferase. The segment at 211 to 371 (FTGNGFDVHE…NLKYFDWTRL (161 aa)) is 2-C-methyl-D-erythritol 2,4-cyclodiphosphate synthase. A divalent metal cation contacts are provided by D217 and H219. 4-CDP-2-C-methyl-D-erythritol 2-phosphate is bound by residues 217–219 (DVH) and 243–244 (HS). H251 is a binding site for a divalent metal cation. Residues 265-267 (DIG), 270-274 (YPDTD), 341-344 (TTTE), F348, and R351 contribute to the 4-CDP-2-C-methyl-D-erythritol 2-phosphate site.

In the N-terminal section; belongs to the IspD/TarI cytidylyltransferase family. IspD subfamily. This sequence in the C-terminal section; belongs to the IspF family. The cofactor is a divalent metal cation.

It carries out the reaction 2-C-methyl-D-erythritol 4-phosphate + CTP + H(+) = 4-CDP-2-C-methyl-D-erythritol + diphosphate. The catalysed reaction is 4-CDP-2-C-methyl-D-erythritol 2-phosphate = 2-C-methyl-D-erythritol 2,4-cyclic diphosphate + CMP. Its pathway is isoprenoid biosynthesis; isopentenyl diphosphate biosynthesis via DXP pathway; isopentenyl diphosphate from 1-deoxy-D-xylulose 5-phosphate: step 2/6. The protein operates within isoprenoid biosynthesis; isopentenyl diphosphate biosynthesis via DXP pathway; isopentenyl diphosphate from 1-deoxy-D-xylulose 5-phosphate: step 4/6. In terms of biological role, bifunctional enzyme that catalyzes the formation of 4-diphosphocytidyl-2-C-methyl-D-erythritol from CTP and 2-C-methyl-D-erythritol 4-phosphate (MEP) (IspD), and catalyzes the conversion of 4-diphosphocytidyl-2-C-methyl-D-erythritol 2-phosphate (CDP-ME2P) to 2-C-methyl-D-erythritol 2,4-cyclodiphosphate (ME-CPP) with a corresponding release of cytidine 5-monophosphate (CMP) (IspF). This is Bifunctional enzyme IspD/IspF from Campylobacter jejuni subsp. doylei (strain ATCC BAA-1458 / RM4099 / 269.97).